The primary structure comprises 143 residues: Deoxyuridine 5'-triphosphate nucleotidohydrolase (143 aa).

Substrate-binding positions include 63 to 65 (RSG), N76, 80 to 82 (TID), and K90.

Belongs to the dUTPase family. Mg(2+) is required as a cofactor.

The enzyme catalyses dUTP + H2O = dUMP + diphosphate + H(+). It participates in pyrimidine metabolism; dUMP biosynthesis; dUMP from dCTP (dUTP route): step 2/2. This enzyme is involved in nucleotide metabolism: it produces dUMP, the immediate precursor of thymidine nucleotides and it decreases the intracellular concentration of dUTP so that uracil cannot be incorporated into DNA. This chain is Deoxyuridine 5'-triphosphate nucleotidohydrolase, found in Clostridioides difficile (Peptoclostridium difficile).